The chain runs to 139 residues: uncharacterized protein (139 aa).

Over residues 1-11 (MALSMSLSSDI) the composition is skewed to polar residues. 2 disordered regions span residues 1-80 (MALS…AAAA) and 100-139 (ASSP…LARS). The segment covering 63–80 (GAGSASAGGSRLAAAAAA) has biased composition (low complexity).

This is an uncharacterized protein from Homo sapiens (Human).